A 490-amino-acid polypeptide reads, in one-letter code: Acetyl-coenzyme A carboxylase carboxyl transferase subunit beta, chloroplastic (490 aa).

The region spanning 221–490 is the CoA carboxyltransferase N-terminal domain; it reads LWVQCENCYG…PLNQKSSKIK (270 aa). Zn(2+) is bound by residues Cys-225, Cys-228, Cys-244, and Cys-247. The C4-type zinc finger occupies 225-247; the sequence is CENCYGLNYKKFLKSKMNICEQC.

Belongs to the AccD/PCCB family. In terms of assembly, acetyl-CoA carboxylase is a heterohexamer composed of biotin carboxyl carrier protein, biotin carboxylase and 2 subunits each of ACCase subunit alpha and ACCase plastid-coded subunit beta (accD). It depends on Zn(2+) as a cofactor. Expressed in leaves, ripening and mature fruit.

The protein localises to the plastid. It localises to the chloroplast stroma. The protein resides in the chromoplast stroma. The enzyme catalyses N(6)-carboxybiotinyl-L-lysyl-[protein] + acetyl-CoA = N(6)-biotinyl-L-lysyl-[protein] + malonyl-CoA. It participates in lipid metabolism; malonyl-CoA biosynthesis; malonyl-CoA from acetyl-CoA: step 1/1. Functionally, component of the acetyl coenzyme A carboxylase (ACC) complex. Biotin carboxylase (BC) catalyzes the carboxylation of biotin on its carrier protein (BCCP) and then the CO(2) group is transferred by the transcarboxylase to acetyl-CoA to form malonyl-CoA. Is up-regulated upon chromoplast differentiation, presumably for fatty acid biosynthesis. The sequence is that of Acetyl-coenzyme A carboxylase carboxyl transferase subunit beta, chloroplastic from Solanum lycopersicum (Tomato).